The primary structure comprises 192 residues: Pyridoxal 5'-phosphate synthase subunit PdxT (192 aa).

Residue 47–49 coordinates L-glutamine; the sequence is GES. The active-site Nucleophile is the cysteine 78. Residues arginine 105 and 139 to 140 each bind L-glutamine; that span reads IR. Active-site charge relay system residues include histidine 175 and glutamate 177.

The protein belongs to the glutaminase PdxT/SNO family. In terms of assembly, in the presence of PdxS, forms a dodecamer of heterodimers. Only shows activity in the heterodimer.

The enzyme catalyses aldehydo-D-ribose 5-phosphate + D-glyceraldehyde 3-phosphate + L-glutamine = pyridoxal 5'-phosphate + L-glutamate + phosphate + 3 H2O + H(+). It catalyses the reaction L-glutamine + H2O = L-glutamate + NH4(+). It participates in cofactor biosynthesis; pyridoxal 5'-phosphate biosynthesis. Its function is as follows. Catalyzes the hydrolysis of glutamine to glutamate and ammonia as part of the biosynthesis of pyridoxal 5'-phosphate. The resulting ammonia molecule is channeled to the active site of PdxS. The sequence is that of Pyridoxal 5'-phosphate synthase subunit PdxT from Solibacter usitatus (strain Ellin6076).